The primary structure comprises 318 residues: tRNA uridine(34) hydroxylase (318 aa).

Residues 123-217 form the Rhodanese domain; that stretch reads EDDDTVIIDA…YGKDPETKGE (95 aa). Catalysis depends on Cys177, which acts as the Cysteine persulfide intermediate.

The protein belongs to the TrhO family.

The catalysed reaction is uridine(34) in tRNA + AH2 + O2 = 5-hydroxyuridine(34) in tRNA + A + H2O. Functionally, catalyzes oxygen-dependent 5-hydroxyuridine (ho5U) modification at position 34 in tRNAs. The protein is tRNA uridine(34) hydroxylase of Staphylococcus aureus (strain MSSA476).